Reading from the N-terminus, the 140-residue chain is Large ribosomal subunit protein uL24 (140 aa).

The protein belongs to the universal ribosomal protein uL24 family. Part of the 50S ribosomal subunit.

One of two assembly initiator proteins, it binds directly to the 5'-end of the 23S rRNA, where it nucleates assembly of the 50S subunit. In terms of biological role, located at the polypeptide exit tunnel on the outside of the subunit. The chain is Large ribosomal subunit protein uL24 from Nanoarchaeum equitans (strain Kin4-M).